The sequence spans 250 residues: Triosephosphate isomerase (250 aa).

9–11 (NWK) contributes to the substrate binding site. Catalysis depends on H95, which acts as the Electrophile. E167 acts as the Proton acceptor in catalysis. Substrate contacts are provided by residues G173, S212, and 233 to 234 (GG).

It belongs to the triosephosphate isomerase family. As to quaternary structure, homodimer.

It localises to the cytoplasm. It carries out the reaction D-glyceraldehyde 3-phosphate = dihydroxyacetone phosphate. It participates in carbohydrate biosynthesis; gluconeogenesis. It functions in the pathway carbohydrate degradation; glycolysis; D-glyceraldehyde 3-phosphate from glycerone phosphate: step 1/1. In terms of biological role, involved in the gluconeogenesis. Catalyzes stereospecifically the conversion of dihydroxyacetone phosphate (DHAP) to D-glyceraldehyde-3-phosphate (G3P). This chain is Triosephosphate isomerase, found in Nitrosococcus oceani (strain ATCC 19707 / BCRC 17464 / JCM 30415 / NCIMB 11848 / C-107).